The primary structure comprises 273 residues: Large ribosomal subunit protein uL2cz/uL2cy (273 aa).

2 disordered regions span residues 1–23 (MAIHLYKTSTSSTRNGAVDSQVK) and 224–273 (NPVD…RRRK). Positions 262-273 (KYSDRFILRRRK) are enriched in basic and acidic residues.

Belongs to the universal ribosomal protein uL2 family. Part of the 50S ribosomal subunit.

The protein resides in the plastid. It is found in the chloroplast. The polypeptide is Large ribosomal subunit protein uL2cz/uL2cy (rpl2-A) (Acorus calamus var. americanus (American sweet flag)).